A 397-amino-acid chain; its full sequence is Probable inactive purple acid phosphatase 28 (397 aa).

An N-terminal signal peptide occupies residues 1–30 (MNCSIGNWKHTVLYLTLIVSLLYFIESLIS). N-linked (GlcNAc...) asparagine glycosylation is found at asparagine 91 and asparagine 209. The Zn(2+) site is built by histidine 266 and histidine 314. 314–316 (HDH) provides a ligand contact to substrate. Histidine 316 is a binding site for Fe cation.

It belongs to the metallophosphoesterase superfamily. Purple acid phosphatase family. As to quaternary structure, homodimer. Fe cation serves as cofactor. Zn(2+) is required as a cofactor. As to expression, expressed in roots, stems, leaves, flowers and siliques.

The protein resides in the secreted. The polypeptide is Probable inactive purple acid phosphatase 28 (PAP28) (Arabidopsis thaliana (Mouse-ear cress)).